The following is a 220-amino-acid chain: Adenylate kinase (220 aa).

10–15 (GAGKGT) is a binding site for ATP. Residues 30–59 (STGDLFRANISQQTELGKLAKSYMDEGNLV) form an NMP region. Residues Thr-31, Arg-36, 57 to 59 (NLV), 85 to 88 (GFPR), and Gln-92 each bind AMP. Residues 126–164 (GRRICRNDSAHVFHVSYKPPKQEGVCDVCGGELYQRDDD) form an LID region. ATP-binding positions include Arg-127 and 137 to 138 (VF). AMP-binding residues include Arg-161 and Arg-172. Gly-200 lines the ATP pocket.

The protein belongs to the adenylate kinase family. As to quaternary structure, monomer.

The protein resides in the cytoplasm. The catalysed reaction is AMP + ATP = 2 ADP. Its pathway is purine metabolism; AMP biosynthesis via salvage pathway; AMP from ADP: step 1/1. Catalyzes the reversible transfer of the terminal phosphate group between ATP and AMP. Plays an important role in cellular energy homeostasis and in adenine nucleotide metabolism. The sequence is that of Adenylate kinase from Streptomyces avermitilis (strain ATCC 31267 / DSM 46492 / JCM 5070 / NBRC 14893 / NCIMB 12804 / NRRL 8165 / MA-4680).